The primary structure comprises 139 residues: Nucleoside diphosphate kinase (139 aa).

Residues K10, F58, R86, T92, R103, and N113 each coordinate ATP. H116 serves as the catalytic Pros-phosphohistidine intermediate.

The protein belongs to the NDK family. In terms of assembly, homotetramer. The cofactor is Mg(2+).

It localises to the cytoplasm. The catalysed reaction is a 2'-deoxyribonucleoside 5'-diphosphate + ATP = a 2'-deoxyribonucleoside 5'-triphosphate + ADP. It carries out the reaction a ribonucleoside 5'-diphosphate + ATP = a ribonucleoside 5'-triphosphate + ADP. Its function is as follows. Major role in the synthesis of nucleoside triphosphates other than ATP. The ATP gamma phosphate is transferred to the NDP beta phosphate via a ping-pong mechanism, using a phosphorylated active-site intermediate. In Caulobacter vibrioides (strain ATCC 19089 / CIP 103742 / CB 15) (Caulobacter crescentus), this protein is Nucleoside diphosphate kinase.